The chain runs to 129 residues: Fluoride-specific ion channel FluC 2 (129 aa).

The next 4 membrane-spanning stretches (helical) occupy residues 3–23, 32–52, 59–79, and 90–110; these read FLYVGVFGALGGMCRYAMNLW, ATLAVNLIGCFLLAFLMQFLA, LVILNGIGTGFIGAFTTFSAF, and GAWLFAVSYVLASFIGGLIMV. The Na(+) site is built by G71 and T74.

It belongs to the fluoride channel Fluc/FEX (TC 1.A.43) family.

Its subcellular location is the cell membrane. It catalyses the reaction fluoride(in) = fluoride(out). Its activity is regulated as follows. Na(+) is not transported, but it plays an essential structural role and its presence is essential for fluoride channel function. In terms of biological role, fluoride-specific ion channel. Important for reducing fluoride concentration in the cell, thus reducing its toxicity. The protein is Fluoride-specific ion channel FluC 2 of Listeria monocytogenes serotype 4b (strain F2365).